Here is a 289-residue protein sequence, read N- to C-terminus: Oxaloacetate decarboxylase (289 aa).

Serine 50 provides a ligand contact to substrate. A Mg(2+)-binding site is contributed by aspartate 88. Substrate is bound by residues arginine 159 and histidine 235.

Belongs to the isocitrate lyase/PEP mutase superfamily. Oxaloacetate decarboxylase family. In terms of assembly, homotetramer; dimer of dimers. Mg(2+) is required as a cofactor.

The catalysed reaction is oxaloacetate + H(+) = pyruvate + CO2. Its function is as follows. Catalyzes the decarboxylation of oxaloacetate into pyruvate. Seems to play a role in maintaining cellular concentrations of bicarbonate and pyruvate. This Pseudomonas fluorescens (strain ATCC BAA-477 / NRRL B-23932 / Pf-5) protein is Oxaloacetate decarboxylase.